The primary structure comprises 84 residues: Mu-conotoxin-like Cal 12.2d (84 aa).

Residues 1–19 form the signal peptide; that stretch reads MKLTCVLVVLLLVLPFGDL. The propeptide occupies 20–42; sequence ITTSNTEDNKRGATPWQNSLKAR. Trp-72 bears the 6'-bromotryptophan mark. Pro-77 is subject to 4-hydroxyproline. Position 81 is a 6'-bromotryptophan (Trp-81).

It belongs to the conotoxin O1 superfamily. Contains 4 disulfide bonds. As to expression, expressed by the venom duct.

The protein resides in the secreted. Its function is as follows. Mu-conotoxins block voltage-gated sodium channels. This toxin reversibly blocks voltage-gated sodium channel in cephalopods, with no alteration in the voltage dependence of sodium conductance or on the kinetics of inactivation. The polypeptide is Mu-conotoxin-like Cal 12.2d (Californiconus californicus (California cone)).